The sequence spans 733 residues: Catalase-peroxidase (733 aa).

The segment at residues tryptophan 96–tyrosine 219 is a cross-link (tryptophyl-tyrosyl-methioninium (Trp-Tyr) (with M-245)). The Proton acceptor role is filled by histidine 97. A cross-link (tryptophyl-tyrosyl-methioninium (Tyr-Met) (with W-96)) is located at residues tyrosine 219 to methionine 245. Histidine 260 is a heme b binding site.

It belongs to the peroxidase family. Peroxidase/catalase subfamily. Homodimer or homotetramer. Heme b serves as cofactor. Formation of the three residue Trp-Tyr-Met cross-link is important for the catalase, but not the peroxidase activity of the enzyme.

The enzyme catalyses H2O2 + AH2 = A + 2 H2O. It catalyses the reaction 2 H2O2 = O2 + 2 H2O. Functionally, bifunctional enzyme with both catalase and broad-spectrum peroxidase activity. This is Catalase-peroxidase from Geobacter sp. (strain M21).